We begin with the raw amino-acid sequence, 92 residues long: MIIKPIGERVLLKHQKKQEVTKGGIYIPESARQEKKEGIVISVGTFEDGKELPLKKGDHVIYGGYQSDEIEIDDEKYIFVDFKDILATIAEE.

Belongs to the GroES chaperonin family. Heptamer of 7 subunits arranged in a ring. Interacts with the chaperonin GroEL.

The protein localises to the cytoplasm. Its function is as follows. Together with the chaperonin GroEL, plays an essential role in assisting protein folding. The GroEL-GroES system forms a nano-cage that allows encapsulation of the non-native substrate proteins and provides a physical environment optimized to promote and accelerate protein folding. GroES binds to the apical surface of the GroEL ring, thereby capping the opening of the GroEL channel. This Methanosarcina barkeri (strain Fusaro / DSM 804) protein is Co-chaperonin GroES.